A 363-amino-acid polypeptide reads, in one-letter code: Small ribosomal subunit biogenesis GTPase RsgA (363 aa).

One can recognise a CP-type G domain in the interval 112–268 (HQQVIAANID…LIDTPGMREL (157 aa)). GTP is bound by residues 157 to 160 (TKAD) and 210 to 218 (GSSGAGKST). Zn(2+)-binding residues include Cys291, Cys296, His298, and Cys304. Positions 340 to 363 (RVAQNNRGKGSGKRPASIDRPGRR) are disordered.

The protein belongs to the TRAFAC class YlqF/YawG GTPase family. RsgA subfamily. Monomer. Associates with 30S ribosomal subunit, binds 16S rRNA. The cofactor is Zn(2+).

The protein resides in the cytoplasm. Functionally, one of several proteins that assist in the late maturation steps of the functional core of the 30S ribosomal subunit. Helps release RbfA from mature subunits. May play a role in the assembly of ribosomal proteins into the subunit. Circularly permuted GTPase that catalyzes slow GTP hydrolysis, GTPase activity is stimulated by the 30S ribosomal subunit. This is Small ribosomal subunit biogenesis GTPase RsgA from Xanthomonas oryzae pv. oryzae (strain MAFF 311018).